Reading from the N-terminus, the 57-residue chain is COP9 signalosome complex subunit 9 (57 aa).

Belongs to the CSN9 family. Component of the CSN complex, probably composed of cops1, cops2, cops3, cops4, cops5, cops6, cops7, cops8 and cops9.

The protein resides in the nucleus. It localises to the cytoplasm. It is found in the nucleoplasm. Its function is as follows. Component of the COP9 signalosome complex (CSN), a complex involved in various cellular and developmental processes. The CSN complex is an essential regulator of the ubiquitin (Ubl) conjugation pathway by mediating the deneddylation of the cullin subunits of SCF-type E3 ligase complexes, leading to decrease the Ubl ligase activity. May play a role in cell proliferation. This Xenopus tropicalis (Western clawed frog) protein is COP9 signalosome complex subunit 9.